Reading from the N-terminus, the 279-residue chain is Large ribosomal subunit protein uL2 (279 aa).

Disordered stretches follow at residues 29–49 (PVKQLTEGKSSSGGRNNNGRV) and 202–279 (NASI…KKKG). Positions 36 to 49 (GKSSSGGRNNNGRV) are enriched in low complexity. The span at 209–220 (GRSRWLGRRPHN) shows a compositional bias: basic residues.

It belongs to the universal ribosomal protein uL2 family. Part of the 50S ribosomal subunit. Forms a bridge to the 30S subunit in the 70S ribosome.

Functionally, one of the primary rRNA binding proteins. Required for association of the 30S and 50S subunits to form the 70S ribosome, for tRNA binding and peptide bond formation. It has been suggested to have peptidyltransferase activity; this is somewhat controversial. Makes several contacts with the 16S rRNA in the 70S ribosome. This is Large ribosomal subunit protein uL2 from Beijerinckia indica subsp. indica (strain ATCC 9039 / DSM 1715 / NCIMB 8712).